The following is a 444-amino-acid chain: Glutamyl-tRNA reductase (444 aa).

Substrate is bound by residues 49–52 (TCNR), serine 109, 114–116 (ETQ), and glutamine 120. The active-site Nucleophile is cysteine 50. Residue 189-194 (GAGKMG) coordinates NADP(+).

It belongs to the glutamyl-tRNA reductase family. As to quaternary structure, homodimer.

The enzyme catalyses (S)-4-amino-5-oxopentanoate + tRNA(Glu) + NADP(+) = L-glutamyl-tRNA(Glu) + NADPH + H(+). Its pathway is porphyrin-containing compound metabolism; protoporphyrin-IX biosynthesis; 5-aminolevulinate from L-glutamyl-tRNA(Glu): step 1/2. Catalyzes the NADPH-dependent reduction of glutamyl-tRNA(Glu) to glutamate 1-semialdehyde (GSA). The polypeptide is Glutamyl-tRNA reductase (Bacillus cereus (strain AH187)).